We begin with the raw amino-acid sequence, 618 residues long: Tyrosine-protein kinase ZAP-70 (618 aa).

Residues 10-102 form the SH2 1 domain; it reads FFYGSISRAE…GLPCNLRKPC (93 aa). The segment at 103–162 is interdomain A; it reads NRPPGLEPQPGVFDCLRDAMVRDYVRQTWKLEGDALEQAIISQAPQVEKLIATTAHERMP. One can recognise an SH2 2 domain in the interval 163–254; sequence WYHSSLTREE…GLIYRLKEVC (92 aa). Position 248 is a phosphotyrosine (Y248). Positions 255 to 336 are interdomain B; that stretch reads PNSSASAAVA…KKLFLKRENL (82 aa). Positions 270–320 are disordered; that stretch reads AHPSTFTQPQRRVDTLNSDGYTPEPARLASSTDKPRPMPMDTSVYESPYSD. Residues 273–289 show a composition bias toward polar residues; the sequence is STFTQPQRRVDTLNSDG. A Phosphoserine modification is found at S287. Residue Y290 is modified to Phosphotyrosine. Residue Y314 is modified to Phosphotyrosine; by LCK. At Y318 the chain carries Phosphotyrosine. Residues 337–597 form the Protein kinase domain; sequence LVADIELGCG…VEQRMRNYYY (261 aa). Residues 343–351 and K368 each bind ATP; that span reads LGCGNFGSV. Residue D460 is the Proton acceptor of the active site. Phosphotyrosine is present on residues Y491 and Y492. K543 is covalently cross-linked (Glycyl lysine isopeptide (Lys-Gly) (interchain with G-Cter in ubiquitin)).

The protein belongs to the protein kinase superfamily. Tyr protein kinase family. SYK/ZAP-70 subfamily. As to quaternary structure, interacts with CD247/CD3Z; this interaction docks ZAP70 at the stimulated TCR. Interacts with NFAM1. Interacts with adapter protein SLA; this interaction negatively regulates T-cell receptor signaling. Interacts with VAV1. Interacts with CBL; this interaction promotes ubiquitination, internalization and subsequent degradation of CD247/CD3Z. Identified in a complex with CBL and UBE2L3. Interacts with SHB. Interacts with adapter protein SLA2; this interaction negatively regulates T-cell receptor signaling. Interacts with CBLB. Interacts (via SH2 domains) with RHOH; this interaction regulates ZAP70 subcellular localization. Interacts with DEF6. Interacts (ubiquitinated form) with OTUD7B and UBASH3B. Phosphorylated on tyrosine residues upon T-cell antigen receptor (TCR) stimulation. Phosphorylation of Tyr-314 and Tyr-314 are essential for ZAP70 positive function on T-lymphocyte activation whereas Tyr-290 has a negative regulatory role. Within the C-terminal kinase domain, Tyr-491 and Tyr-492 are phosphorylated after TCR induction, Tyr-491 playing a negative regulatory role and Tyr-492 a positive. Tyr-492 is dephosphorylated by PTN22. In terms of processing, ubiquitinated in response to T cell activation. Deubiquitinated by OTUD7B. As to expression, isoform 1 and isoform 2 are expressed in thymus, spleen and lymph nodes.

It is found in the cytoplasm. The protein localises to the cell membrane. It carries out the reaction L-tyrosyl-[protein] + ATP = O-phospho-L-tyrosyl-[protein] + ADP + H(+). Activated by phosphorylation at Tyr-492 in the activation loop. Functionally, tyrosine kinase that plays an essential role in regulation of the adaptive immune response. Regulates motility, adhesion and cytokine expression of mature T-cells, as well as thymocyte development. Also contributes to the development and activation of primary B-lymphocytes. When antigen presenting cells (APC) activate T-cell receptor (TCR), a serie of phosphorylations lead to the recruitment of ZAP70 to the doubly phosphorylated TCR component CD3Z through ITAM motif at the plasma membrane. This recruitment serves to localization to the stimulated TCR and to relieve its autoinhibited conformation. Release of ZAP70 active conformation is further stabilized by phosphorylation mediated by LCK. Subsequently, ZAP70 phosphorylates at least 2 essential adapter proteins: LAT and LCP2. In turn, a large number of signaling molecules are recruited and ultimately lead to lymphokine production, T-cell proliferation and differentiation. Furthermore, ZAP70 controls cytoskeleton modifications, adhesion and mobility of T-lymphocytes, thus ensuring correct delivery of effectors to the APC. ZAP70 is also required for TCR-CD3Z internalization and degradation through interaction with the E3 ubiquitin-protein ligase CBL and adapter proteins SLA and SLA2. Thus, ZAP70 regulates both T-cell activation switch on and switch off by modulating TCR expression at the T-cell surface. During thymocyte development, ZAP70 promotes survival and cell-cycle progression of developing thymocytes before positive selection (when cells are still CD4/CD8 double negative). Additionally, ZAP70-dependent signaling pathway may also contribute to primary B-cells formation and activation through B-cell receptor (BCR). In Mus musculus (Mouse), this protein is Tyrosine-protein kinase ZAP-70 (Zap70).